The primary structure comprises 505 residues: tRNA-2-methylthio-N(6)-dimethylallyladenosine synthase (505 aa).

Residues 14-132 (RTYEVRTYGC…LPVLLERARV (119 aa)) form the MTTase N-terminal domain. 6 residues coordinate [4Fe-4S] cluster: Cys-23, Cys-61, Cys-95, Cys-169, Cys-173, and Cys-176. Positions 155 to 386 (RESAYAAWVS…ALQEEISWEE (232 aa)) constitute a Radical SAM core domain. The TRAM domain maps to 388–456 (KKQVGRTLEL…PHHLLAEGPV (69 aa)).

It belongs to the methylthiotransferase family. MiaB subfamily. Monomer. [4Fe-4S] cluster is required as a cofactor.

It is found in the cytoplasm. The enzyme catalyses N(6)-dimethylallyladenosine(37) in tRNA + (sulfur carrier)-SH + AH2 + 2 S-adenosyl-L-methionine = 2-methylsulfanyl-N(6)-dimethylallyladenosine(37) in tRNA + (sulfur carrier)-H + 5'-deoxyadenosine + L-methionine + A + S-adenosyl-L-homocysteine + 2 H(+). Functionally, catalyzes the methylthiolation of N6-(dimethylallyl)adenosine (i(6)A), leading to the formation of 2-methylthio-N6-(dimethylallyl)adenosine (ms(2)i(6)A) at position 37 in tRNAs that read codons beginning with uridine. The protein is tRNA-2-methylthio-N(6)-dimethylallyladenosine synthase of Streptomyces viridosporus (strain ATCC 14672 / DSM 40746 / JCM 4963 / KCTC 9882 / NRRL B-12104 / FH 1290) (Streptomyces ghanaensis).